The primary structure comprises 1431 residues: DNA-directed RNA polymerase subunit beta' (1431 aa).

Zn(2+) is bound by residues Cys66, Cys68, Cys81, and Cys84. Mg(2+)-binding residues include Asp470, Asp472, and Asp474. Residues Cys813, Cys887, Cys894, and Cys897 each coordinate Zn(2+).

This sequence belongs to the RNA polymerase beta' chain family. In terms of assembly, the RNAP catalytic core consists of 2 alpha, 1 beta, 1 beta' and 1 omega subunit. When a sigma factor is associated with the core the holoenzyme is formed, which can initiate transcription. Requires Mg(2+) as cofactor. Zn(2+) serves as cofactor.

It carries out the reaction RNA(n) + a ribonucleoside 5'-triphosphate = RNA(n+1) + diphosphate. Its function is as follows. DNA-dependent RNA polymerase catalyzes the transcription of DNA into RNA using the four ribonucleoside triphosphates as substrates. This chain is DNA-directed RNA polymerase subunit beta', found in Parabacteroides distasonis (strain ATCC 8503 / DSM 20701 / CIP 104284 / JCM 5825 / NCTC 11152).